The chain runs to 319 residues: tRNA-modifying protein YgfZ (319 aa).

Residues W27 and W189 each coordinate folate.

It belongs to the tRNA-modifying YgfZ family.

Its subcellular location is the cytoplasm. Its function is as follows. Folate-binding protein involved in regulating the level of ATP-DnaA and in the modification of some tRNAs. It is probably a key factor in regulatory networks that act via tRNA modification, such as initiation of chromosomal replication. The sequence is that of tRNA-modifying protein YgfZ from Buchnera aphidicola subsp. Acyrthosiphon pisum (strain APS) (Acyrthosiphon pisum symbiotic bacterium).